A 218-amino-acid polypeptide reads, in one-letter code: GILT-like protein ZK669.3 (218 aa).

Positions 1 to 21 (MRRLNGVFICLILFITKISYA) are cleaved as a signal peptide. N129 and N185 each carry an N-linked (GlcNAc...) asparagine glycan.

Belongs to the GILT family.

It is found in the secreted. The sequence is that of GILT-like protein ZK669.3 from Caenorhabditis elegans.